The sequence spans 243 residues: Transmembrane protein 176A (243 aa).

Position 42 is a phosphoserine (Ser-42). The next 4 helical transmembrane spans lie at 65 to 85, 92 to 112, 122 to 142, and 204 to 224; these read WVVQ…LYIC, TQGA…VAFL, ALMR…AIVI, and LLGV…VYLW.

It belongs to the TMEM176 family. In terms of assembly, interacts with MCOLN2.

Its subcellular location is the membrane. The polypeptide is Transmembrane protein 176A (Tmem176a) (Rattus norvegicus (Rat)).